A 322-amino-acid chain; its full sequence is Cytochrome c biogenesis protein CcsA (322 aa).

7 consecutive transmembrane segments (helical) span residues Ile9–Leu29, Gly44–Gly64, Leu68–Ile88, Met143–Ile163, Ile226–Asn246, Thr260–His274, and Ile289–Ile309.

The protein belongs to the CcmF/CycK/Ccl1/NrfE/CcsA family. In terms of assembly, may interact with Ccs1.

It localises to the plastid. It is found in the chloroplast thylakoid membrane. Required during biogenesis of c-type cytochromes (cytochrome c6 and cytochrome f) at the step of heme attachment. The sequence is that of Cytochrome c biogenesis protein CcsA from Hordeum vulgare (Barley).